A 100-amino-acid polypeptide reads, in one-letter code: Succinate dehydrogenase subunit 7B, mitochondrial (100 aa).

The tract at residues 1–25 (MAFLLNNASISSHLRSSSSQKTGDA) is disordered. A mitochondrion-targeting transit peptide spans 1 to 32 (MAFLLNNASISSHLRSSSSQKTGDALSISRRG). The segment covering 9 to 19 (SISSHLRSSSS) has biased composition (low complexity).

Component of complex II composed of eight subunits in plants: four classical SDH subunits SDH1, SDH2, SDH3 and SDH4 (a flavoprotein (FP), an iron-sulfur protein (IP), and a cytochrome b composed of a large and a small subunit.), as well as four subunits unknown in mitochondria from bacteria and heterotrophic eukaryotes.

The protein resides in the mitochondrion inner membrane. Its pathway is carbohydrate metabolism; tricarboxylic acid cycle. The sequence is that of Succinate dehydrogenase subunit 7B, mitochondrial from Arabidopsis thaliana (Mouse-ear cress).